Here is a 71-residue protein sequence, read N- to C-terminus: Small ribosomal subunit protein bS18 (71 aa).

This sequence belongs to the bacterial ribosomal protein bS18 family. As to quaternary structure, part of the 30S ribosomal subunit. Forms a tight heterodimer with protein bS6.

Binds as a heterodimer with protein bS6 to the central domain of the 16S rRNA, where it helps stabilize the platform of the 30S subunit. The polypeptide is Small ribosomal subunit protein bS18 (Synechococcus sp. (strain JA-2-3B'a(2-13)) (Cyanobacteria bacterium Yellowstone B-Prime)).